The primary structure comprises 354 residues: Protein CbrA (354 aa).

It belongs to the CbrA family.

The chain is Protein CbrA (cbrA) from Escherichia coli (strain K12).